A 447-amino-acid chain; its full sequence is Tubulin beta chain (447 aa).

Residues Q11, E69, S138, G142, T143, G144, N204, and N226 each coordinate GTP. E69 serves as a coordination point for Mg(2+). Residues Q424–E447 are disordered. The span at E432–E447 shows a compositional bias: acidic residues.

Belongs to the tubulin family. As to quaternary structure, dimer of alpha and beta chains. A typical microtubule is a hollow water-filled tube with an outer diameter of 25 nm and an inner diameter of 15 nM. Alpha-beta heterodimers associate head-to-tail to form protofilaments running lengthwise along the microtubule wall with the beta-tubulin subunit facing the microtubule plus end conferring a structural polarity. Microtubules usually have 13 protofilaments but different protofilament numbers can be found in some organisms and specialized cells. Mg(2+) is required as a cofactor.

Its subcellular location is the cytoplasm. The protein resides in the cytoskeleton. In terms of biological role, tubulin is the major constituent of microtubules, a cylinder consisting of laterally associated linear protofilaments composed of alpha- and beta-tubulin heterodimers. Microtubules grow by the addition of GTP-tubulin dimers to the microtubule end, where a stabilizing cap forms. Below the cap, tubulin dimers are in GDP-bound state, owing to GTPase activity of alpha-tubulin. This is Tubulin beta chain from Uncinula necator (Grape powdery mildew).